A 300-amino-acid chain; its full sequence is N-acetylmuramic acid 6-phosphate etherase (300 aa).

Positions 57–220 (ITHAFAHGGR…TSGAMIRSGK (164 aa)) constitute an SIS domain. Residue glutamate 85 is the Proton donor of the active site. The active site involves glutamate 116.

Belongs to the GCKR-like family. MurNAc-6-P etherase subfamily. Homodimer.

It carries out the reaction N-acetyl-D-muramate 6-phosphate + H2O = N-acetyl-D-glucosamine 6-phosphate + (R)-lactate. It functions in the pathway amino-sugar metabolism; 1,6-anhydro-N-acetylmuramate degradation. It participates in amino-sugar metabolism; N-acetylmuramate degradation. Its pathway is cell wall biogenesis; peptidoglycan recycling. Specifically catalyzes the cleavage of the D-lactyl ether substituent of MurNAc 6-phosphate, producing GlcNAc 6-phosphate and D-lactate. Together with AnmK, is also required for the utilization of anhydro-N-acetylmuramic acid (anhMurNAc) either imported from the medium or derived from its own cell wall murein, and thus plays a role in cell wall recycling. This Vibrio vulnificus (strain CMCP6) protein is N-acetylmuramic acid 6-phosphate etherase.